Consider the following 120-residue polypeptide: Large ribosomal subunit protein uL18 (120 aa).

The protein belongs to the universal ribosomal protein uL18 family. In terms of assembly, part of the 50S ribosomal subunit; part of the 5S rRNA/L5/L18/L25 subcomplex. Contacts the 5S and 23S rRNAs.

Functionally, this is one of the proteins that bind and probably mediate the attachment of the 5S RNA into the large ribosomal subunit, where it forms part of the central protuberance. In Treponema pallidum (strain Nichols), this protein is Large ribosomal subunit protein uL18.